An 85-amino-acid polypeptide reads, in one-letter code: Toxin BmKITc (85 aa).

The N-terminal stretch at 1–21 (MKLFLLLVIFASMLNDGLVNA) is a signal peptide. The 61-residue stretch at 22–82 (DGYIRGSDGC…KWKYESNTCG (61 aa)) folds into the LCN-type CS-alpha/beta domain. 4 disulfide bridges follow: Cys31/Cys81, Cys35/Cys56, Cys42/Cys63, and Cys46/Cys65.

Belongs to the long (4 C-C) scorpion toxin superfamily. Sodium channel inhibitor family. Beta subfamily. As to expression, expressed by the venom gland.

The protein localises to the secreted. Functionally, depressant insect beta-toxins cause a transient contraction paralysis followed by a slow flaccid paralysis. They bind voltage-independently at site-4 of sodium channels (Nav) and shift the voltage of activation toward more negative potentials thereby affecting sodium channel activation and promoting spontaneous and repetitive firing. This chain is Toxin BmKITc, found in Olivierus martensii (Manchurian scorpion).